The sequence spans 548 residues: mRNA cleavage and polyadenylation factor CLP1 (548 aa).

Residues Glu-19, Lys-60, and 123–128 (SSGKTT) contribute to the ATP site. A compositionally biased stretch (basic and acidic residues) spans 437–481 (ESEVKEEVKEEKNEKDGEIKQDGEGEKKGEGKGEGEGEGEGKYGE). The segment at 437-500 (ESEVKEEVKE…DEEEVPFREE (64 aa)) is disordered. The span at 482–494 (EEGEAEGEDDEEE) shows a compositional bias: acidic residues.

Belongs to the Clp1 family. Clp1 subfamily. As to quaternary structure, component of a pre-mRNA cleavage factor complex. Interacts directly with PCF11.

Its subcellular location is the nucleus. Functionally, required for endonucleolytic cleavage during polyadenylation-dependent pre-mRNA 3'-end formation. The sequence is that of mRNA cleavage and polyadenylation factor CLP1 from Cryptococcus neoformans var. neoformans serotype D (strain B-3501A) (Filobasidiella neoformans).